A 493-amino-acid chain; its full sequence is Zinc finger CCCH domain-containing protein 34 (493 aa).

3 consecutive C3H1-type zinc fingers follow at residues 14–43 (RRCNTDCVYFLASPFTCTKGSKCEYRHADG), 45–71 (RFNRRNCWYWFKGNCVNPSCTFRHPPL), and 91–118 (VKAANPCYFYYNSHCSKGDNCPYLHEPL). The disordered stretch occupies residues 397–477 (MGECPQPANH…SFSDDFEGPK (81 aa)). Positions 409–420 (FRGRRKKNRGKQ) are enriched in basic residues. Over residues 452 to 468 (SNSSFSHSTACTPNVRS) the composition is skewed to polar residues.

This Oryza sativa subsp. japonica (Rice) protein is Zinc finger CCCH domain-containing protein 34.